A 212-amino-acid polypeptide reads, in one-letter code: MGREFLDIFENWAQSYDSSVYGHDEQYRDVFDGYETILNTVVEKSGNVVLEFGVGTGNLTKKLIEANKTVYGIEPSAPMRELAKEKLGHVTIEDGDFLQFPLPNEPFDTIVSTYAFHHLTDQEKEEAIGKYSTLLRKGGKIVFADTAFINREAYEAMIAEAKQKGFVDLAEDLQREYYTTIPALEHMFTTHGFTVTFTPMNRFVWLMEAVKQ.

G53, E74, and D96 together coordinate S-adenosyl-L-methionine.

It belongs to the methyltransferase superfamily. YrrT family.

Functionally, could be a S-adenosyl-L-methionine-dependent methyltransferase. This is an uncharacterized protein from Anoxybacillus flavithermus (strain DSM 21510 / WK1).